A 2470-amino-acid chain; its full sequence is Serine/threonine-protein kinase mTor (2470 aa).

8 HEAT repeats span residues 172 to 209 (QHILTFFEVIFNAIFDPKPAIRESAGEALRAALIVTAQ), 746 to 785 (SYMNPILKALVPKLHEPESNPGVILNVLRTIGDLAEVNGG), 791 to 829 (LWADDLLSILLEMLGDAGSPDKRGVALWTLGQLISATGR), 835 to 873 (HKYPVLIDILINFLKTEQRRSIRRETIRVLGLLGAMDPY), 962 to 999 (PYLAQVLPNLLDNVRTADNNLREFLFQQLAILVAFVKL), 1043 to 1080 (DYLAELIPQILRVLQHDNSKDRMVTRRLLQALQKFGST), 1083 to 1122 (YYLPLILPPIVKLFDSPYVPQQVSMVALETINNLACQLDF), and 1124 to 1160 (DFSSRIIHPLVRVLDAEPELRDQAMTTLRSLAKQLGK). The 555-residue stretch at 1349–1903 (LLGTRAMACR…VYPLTVASKS (555 aa)) folds into the FAT domain. TPR repeat units follow at residues 1407–1440 (ANELNVQGRWYEKLHNWDEALEHYERNLKTDSSD) and 1718–1751 (MATWQNKLQDSIRPDAIQGALECFEKATSYDPNW). One copy of the HEAT 9 repeat lies at 1854-1891 (NTWLQVIPQLIARIDTHRQLVGQLIHQLLMDIGKNHPQ). The 313-residue stretch at 2077–2389 (IKTNLQVITS…SLSNSVEDSL (313 aa)) folds into the PI3K/PI4K catalytic domain. A G-loop region spans residues 2083-2089 (VITSKQR). A catalytic loop region spans residues 2256 to 2264 (GLGDRHPSN). Residues 2276–2301 (HIDFGDCFEVAMTREKFPEKIPFRLT) form an activation loop region. The disordered stretch occupies residues 2364-2389 (AGAGAPGGRGGSGMQDSLSNSVEDSL). Over residues 2367–2376 (GAPGGRGGSG) the composition is skewed to gly residues. Residues 2377 to 2386 (MQDSLSNSVE) are compositionally biased toward polar residues. The 33-residue stretch at 2438–2470 (KSVNEQSQVELLIQQATNNENLCQCYIGWCPFW) folds into the FATC domain.

This sequence belongs to the PI3/PI4-kinase family. In terms of assembly, may be part of a minimal complex, TORC1, consisting of mTor, raptor and lst8. May be part of a minimal complex, TORC2, consisting of mTor, rictor and lst8. Self-associates; assembles into homomultimeric complexes. Component of a multiprotein complex.

The catalysed reaction is L-seryl-[protein] + ATP = O-phospho-L-seryl-[protein] + ADP + H(+). It catalyses the reaction L-threonyl-[protein] + ATP = O-phospho-L-threonyl-[protein] + ADP + H(+). In terms of biological role, promotes cell and tissue growth, maintains tissue homeostatis and controls responses to environmental stress and aging. Regulates growth during animal development by coupling growth factor signaling to nutrient availability. Central regulators of autophagy. May be involved in atg1 phosphorylation. May also be involved, directly or indirectly, in the control of neuronal function. Phosphorylates S6K/p70S6K, in vitro. May regulate the activity of S6K. Overexpression inhibits growth and reduces cell size. Affects the timing of neuronal cell differentiation. Hyperactivation of the signaling leads to accelerated differentiation, whereas inhibition of the signaling retards differentiation. Thus, in addition to controlling growth of the cell in which it resides, it can also influence growth of distant cells and organs during development via a humoral mechanism. As part of the TORC1 complex regulates energy homeostasis and promotes certain aspects of larval growth by negatively regulating REPTOR. REPTOR functions downstream of TORC1 to regulate the expression of stress response genes in response to TORC1 inhibition resulting from nutrient deprivation. When TORC1 activity is high it phosphorylates REPTOR which inhibits its recruitment into the nucleus and antagonizes their function. This function is essential under normal feeding conditions to promote TORC1-dependent growth during larval development and, in adults and larvae to prevent the REPTOR-dependent expression of nutrient stress response genes. In short, during development, it primarily controls growth, whereas in the adult, where there is relatively little growth, it controls aging and other aspects of nutrient-related physiology. Rag GTPases act as activators of TORC1 in response to amino acid signals. This is Serine/threonine-protein kinase mTor from Drosophila melanogaster (Fruit fly).